The chain runs to 489 residues: Phosphoenolpyruvate carboxykinase (ATP) (489 aa).

Residues Arg53 and Tyr159 each coordinate substrate. ATP contacts are provided by residues His185, 208–216 (GLSGTGKTT), Asp258, Arg300, 409–410 (KI), and Ser415. Residue Arg300 coordinates substrate.

The protein belongs to the phosphoenolpyruvate carboxykinase (ATP) family.

It is found in the cytoplasm. It catalyses the reaction oxaloacetate + ATP = phosphoenolpyruvate + ADP + CO2. The protein operates within carbohydrate biosynthesis; gluconeogenesis. Involved in the gluconeogenesis. Catalyzes the conversion of oxaloacetate (OAA) to phosphoenolpyruvate (PEP) through direct phosphoryl transfer between the nucleoside triphosphate and OAA. In Aeropyrum pernix (strain ATCC 700893 / DSM 11879 / JCM 9820 / NBRC 100138 / K1), this protein is Phosphoenolpyruvate carboxykinase (ATP).